A 214-amino-acid polypeptide reads, in one-letter code: Transcriptional regulatory protein MctR (214 aa).

A Response regulatory domain is found at 8–124; that stretch reads RVLLIDNHPL…EIVSAIETVA (117 aa). Position 59 is a 4-aspartylphosphate (Asp59). Residues 143–208 form the HTH luxR-type domain; it reads VEEGSDPLTP…GLIRYALDHG (66 aa). Residues 167 to 186 constitute a DNA-binding region (H-T-H motif); the sequence is NKEIAETLGITSATAETHRK.

It localises to the cytoplasm. Member of the two-component regulatory system MctS/MctR, which activates mctP expression. The chain is Transcriptional regulatory protein MctR from Rhizobium johnstonii (strain DSM 114642 / LMG 32736 / 3841) (Rhizobium leguminosarum bv. viciae).